Here is a 137-residue protein sequence, read N- to C-terminus: Nucleoside diphosphate kinase (137 aa).

ATP is bound by residues Lys9, Phe57, Arg85, Thr91, Arg102, and Asn112. Residue His115 is the Pros-phosphohistidine intermediate of the active site.

It belongs to the NDK family. Homotetramer. Mg(2+) is required as a cofactor.

Its subcellular location is the cytoplasm. The catalysed reaction is a 2'-deoxyribonucleoside 5'-diphosphate + ATP = a 2'-deoxyribonucleoside 5'-triphosphate + ADP. It carries out the reaction a ribonucleoside 5'-diphosphate + ATP = a ribonucleoside 5'-triphosphate + ADP. Major role in the synthesis of nucleoside triphosphates other than ATP. The ATP gamma phosphate is transferred to the NDP beta phosphate via a ping-pong mechanism, using a phosphorylated active-site intermediate. The protein is Nucleoside diphosphate kinase of Citrifermentans bemidjiense (strain ATCC BAA-1014 / DSM 16622 / JCM 12645 / Bem) (Geobacter bemidjiensis).